The primary structure comprises 1220 residues: Protein patched homolog 1 (1220 aa).

The tract at residues 1–27 is disordered; sequence MASDPRDPGPAGGVFGDLPPSYTRSPP. At 1 to 84 the chain is on the cytoplasmic side; it reads MASDPRDPGP…GCHIQRHCGK (84 aa). The helical transmembrane segment at 85-105 threads the bilayer; the sequence is VLFIGLLVFGALSVGLRVAAI. Topologically, residues 106–419 are extracellular; sequence ETDIEKLWVE…LNDIMKSFSD (314 aa). An N-linked (GlcNAc...) asparagine glycan is attached at Asn-397. A helical transmembrane segment spans residues 420–440; the sequence is VSVIRVAGGYLLMLAYACVTM. Residues 421 to 579 form the SSD domain; it reads SVIRVAGGYL…LLIFPAILSL (159 aa). Over 441 to 449 the chain is Cytoplasmic; the sequence is LRWDCAKSQ. A helical membrane pass occupies residues 450–470; the sequence is GAVGLAGVLLVALSVAAGLGL. The Extracellular segment spans residues 471-484; sequence CSLLGLSFNAATTQ. The helical transmembrane segment at 485 to 505 threads the bilayer; sequence VLPSLALGIGVDDMFLLGHSF. The Cytoplasmic portion of the chain corresponds to 506 to 528; it reads TETRSNIPFKERTGDCLRRTGTS. The chain crosses the membrane as a helical span at residues 529 to 549; it reads VALTSVNNMIAFFMAALVPIP. Over 550–558 the chain is Extracellular; the sequence is ALRAFSLQA. The helical transmembrane segment at 559–579 threads the bilayer; sequence AVVVVFNFAMALLIFPAILSL. Residues 580 to 739 lie on the Cytoplasmic side of the membrane; that stretch reads DLHRREDKRL…APLLLKPETK (160 aa). The helical transmembrane segment at 740-760 threads the bilayer; the sequence is TVVVVVFVALLSLSLYGTTMV. Residues 761–1016 lie on the Extracellular side of the membrane; that stretch reads HDGLYLTDIV…WEQYIGLRHW (256 aa). N-linked (GlcNAc...) asparagine glycans are attached at residues Asn-865 and Asn-888. Residues 1017–1037 form a helical membrane-spanning segment; sequence FLLSISVVLACTFLVCAILLL. The Cytoplasmic segment spans residues 1038 to 1044; that stretch reads NPWTAGV. The chain crosses the membrane as a helical span at residues 1045–1065; it reads IVFILPMMTVELFGIMGLIGI. Topologically, residues 1066-1072 are extracellular; it reads KLSAIPV. The helical transmembrane segment at 1073–1093 threads the bilayer; that stretch reads VILIASVGIGVEFTVHIALGF. The Cytoplasmic segment spans residues 1094–1110; sequence LTAIGDRNTRSAVAMEH. The chain crosses the membrane as a helical span at residues 1111–1131; sequence MFAPVIDGAISTLLGVLMLAG. Topologically, residues 1132–1143 are extracellular; that stretch reads SEFDFIMRYFFA. Residues 1144–1164 traverse the membrane as a helical segment; it reads VLAILTLLGILNGLVLLPVLL. Topologically, residues 1165–1220 are cytoplasmic; sequence SLMGPPAEVVPANNANHLQSPSPEPMPPPMNHHGYYAGHIPKASHQAFSETSDSEY.

This sequence belongs to the patched family. Post-translationally, glycosylation is necessary for SHH binding. As to expression, detected in embryonic presomitic mesoderm, neuroectoderm, tissue surrounding the notochord, ventral neural tube.

It localises to the membrane. Its function is as follows. Acts as a receptor for sonic hedgehog (SHH), indian hedgehog (IHH) and desert hedgehog (DHH). Associates with the smoothened protein (SMO) to transduce the hedgehog's proteins signal. This chain is Protein patched homolog 1 (ptch1), found in Danio rerio (Zebrafish).